A 213-amino-acid chain; its full sequence is ATP phosphoribosyltransferase (213 aa).

Belongs to the ATP phosphoribosyltransferase family. Short subfamily. In terms of assembly, heteromultimer composed of HisG and HisZ subunits.

The protein localises to the cytoplasm. The catalysed reaction is 1-(5-phospho-beta-D-ribosyl)-ATP + diphosphate = 5-phospho-alpha-D-ribose 1-diphosphate + ATP. Its pathway is amino-acid biosynthesis; L-histidine biosynthesis; L-histidine from 5-phospho-alpha-D-ribose 1-diphosphate: step 1/9. Functionally, catalyzes the condensation of ATP and 5-phosphoribose 1-diphosphate to form N'-(5'-phosphoribosyl)-ATP (PR-ATP). Has a crucial role in the pathway because the rate of histidine biosynthesis seems to be controlled primarily by regulation of HisG enzymatic activity. This Bacillus licheniformis (strain ATCC 14580 / DSM 13 / JCM 2505 / CCUG 7422 / NBRC 12200 / NCIMB 9375 / NCTC 10341 / NRRL NRS-1264 / Gibson 46) protein is ATP phosphoribosyltransferase.